The primary structure comprises 82 residues: Small ribosomal subunit protein bS16 (82 aa).

It belongs to the bacterial ribosomal protein bS16 family.

This is Small ribosomal subunit protein bS16 from Vibrio atlanticus (strain LGP32) (Vibrio splendidus (strain Mel32)).